The chain runs to 1131 residues: DNA polymerase II large subunit (1131 aa).

It belongs to the archaeal DNA polymerase II family. In terms of assembly, heterodimer of a large subunit and a small subunit.

It catalyses the reaction DNA(n) + a 2'-deoxyribonucleoside 5'-triphosphate = DNA(n+1) + diphosphate. The enzyme catalyses Exonucleolytic cleavage in the 3'- to 5'-direction to yield nucleoside 5'-phosphates.. Its function is as follows. Possesses two activities: a DNA synthesis (polymerase) and an exonucleolytic activity that degrades single-stranded DNA in the 3'- to 5'-direction. Has a template-primer preference which is characteristic of a replicative DNA polymerase. In Methanococcus maripaludis (strain C5 / ATCC BAA-1333), this protein is DNA polymerase II large subunit.